The chain runs to 412 residues: DNA polymerase IV 2 (412 aa).

A UmuC domain is found at Ile7 to Gly192. Asp11 and Asp107 together coordinate Mg(2+). The active site involves Glu108.

Belongs to the DNA polymerase type-Y family. In terms of assembly, monomer. It depends on Mg(2+) as a cofactor.

The protein resides in the cytoplasm. The enzyme catalyses DNA(n) + a 2'-deoxyribonucleoside 5'-triphosphate = DNA(n+1) + diphosphate. In terms of biological role, poorly processive, error-prone DNA polymerase involved in untargeted mutagenesis. Copies undamaged DNA at stalled replication forks, which arise in vivo from mismatched or misaligned primer ends. These misaligned primers can be extended by PolIV. Exhibits no 3'-5' exonuclease (proofreading) activity. May be involved in translesion synthesis (TSL), in conjunction with the beta clamp from PolIII. This Bacillus subtilis (strain 168) protein is DNA polymerase IV 2 (dinB2).